Here is a 359-residue protein sequence, read N- to C-terminus: MAEHGAHITTASVADDQPSIFEVVAQDSLMTAVRPALQHVVKVLAESNPAHYGFFWRWFDEIFTLLDFLLQQHYLSRTSASFSEHFYGLKRIVAGSSPQLQRPASAGLPKEHLWKSAMFLVLLPYLKVKLEKLASTLREEDEYSIHPPSSHWKRFYRVFLAAYPFVTMTWEGWFLTQQLRYILGKAEHHSPLLKLAGVRLGRLTAQDIQAMEHRLVEASAMQEPVRSIGKKIKSALKKAVGGVALSLSTGLSVGVFFLQFLDWWYSSENQETIKSLTALPTPPPPVHLDYNSDSPLLPKMKTVCPLCRKARVNDTVLATSGYVFCYRCVFNYVRSHQACPITGYPTEVQHLIKLYSPEN.

At 1–19 (MAEHGAHITTASVADDQPS) the chain is on the peroxisomal matrix side. The chain crosses the membrane as a helical span at residues 20–47 (IFEVVAQDSLMTAVRPALQHVVKVLAES). The Cytoplasmic portion of the chain corresponds to 48 to 51 (NPAH). A helical transmembrane segment spans residues 52-76 (YGFFWRWFDEIFTLLDFLLQQHYLS). The Peroxisomal matrix segment spans residues 77-109 (RTSASFSEHFYGLKRIVAGSSPQLQRPASAGLP). The helical transmembrane segment at 110 to 139 (KEHLWKSAMFLVLLPYLKVKLEKLASTLRE) threads the bilayer. Topologically, residues 140-144 (EDEYS) are cytoplasmic. Residues 145–183 (IHPPSSHWKRFYRVFLAAYPFVTMTWEGWFLTQQLRYIL) form a helical membrane-spanning segment. The Peroxisomal matrix portion of the chain corresponds to 184-249 (GKAEHHSPLL…VGGVALSLST (66 aa)). A helical membrane pass occupies residues 250–277 (GLSVGVFFLQFLDWWYSSENQETIKSLT). The Cytoplasmic segment spans residues 278-359 (ALPTPPPPVH…HLIKLYSPEN (82 aa)). 4 residues coordinate Zn(2+): Cys-304, Cys-307, Cys-325, and Cys-328. The RING-type; degenerate zinc-finger motif lies at 304-343 (CPLCRKARVNDTVLATSGYVFCYRCVFNYVRSHQACPITG).

This sequence belongs to the pex2/pex10/pex12 family. In terms of assembly, component of the PEX2-PEX10-PEX12 retrotranslocation channel, composed of PEX2, PEX10 and PEX12. Interacts with PEX19 via its cytoplasmic domain.

It localises to the peroxisome membrane. The protein operates within protein modification; protein ubiquitination. Functionally, component of a retrotranslocation channel required for peroxisome organization by mediating export of the PEX5 receptor from peroxisomes to the cytosol, thereby promoting PEX5 recycling. The retrotranslocation channel is composed of PEX2, PEX10 and PEX12; each subunit contributing transmembrane segments that coassemble into an open channel that specifically allows the passage of PEX5 through the peroxisomal membrane. PEX12 also regulates PEX5 recycling by activating the E3 ubiquitin-protein ligase activity of PEX10. When PEX5 recycling is compromised, PEX12 stimulates PEX10-mediated polyubiquitination of PEX5, leading to its subsequent degradation. This Rattus norvegicus (Rat) protein is Peroxisome assembly protein 12 (Pex12).